We begin with the raw amino-acid sequence, 331 residues long: uncharacterized protein (331 aa).

An ATP-binding site is contributed by 43-50; it reads GANESGKS.

This is an uncharacterized protein from Methanocaldococcus jannaschii (strain ATCC 43067 / DSM 2661 / JAL-1 / JCM 10045 / NBRC 100440) (Methanococcus jannaschii).